The following is a 493-amino-acid chain: Protein dml1 (493 aa).

This sequence belongs to the misato family.

Its subcellular location is the mitochondrion. Functionally, involved in the partitioning of the mitochondrial organelle and mitochondrial DNA (mtDNA) inheritance. This chain is Protein dml1 (dml1), found in Aspergillus oryzae (strain ATCC 42149 / RIB 40) (Yellow koji mold).